Consider the following 296-residue polypeptide: Ribosomal RNA small subunit methyltransferase H (296 aa).

Residues Gly30 to His32, Asp49, Phe76, Asp97, and Gln104 each bind S-adenosyl-L-methionine.

This sequence belongs to the methyltransferase superfamily. RsmH family.

Its subcellular location is the cytoplasm. The catalysed reaction is cytidine(1402) in 16S rRNA + S-adenosyl-L-methionine = N(4)-methylcytidine(1402) in 16S rRNA + S-adenosyl-L-homocysteine + H(+). In terms of biological role, specifically methylates the N4 position of cytidine in position 1402 (C1402) of 16S rRNA. The protein is Ribosomal RNA small subunit methyltransferase H of Mesomycoplasma hyopneumoniae (strain 7448) (Mycoplasma hyopneumoniae).